The chain runs to 297 residues: Bifunctional protein FolD 2 (297 aa).

NADP(+) is bound by residues 172-174, T199, and V240; that span reads GRG.

The protein belongs to the tetrahydrofolate dehydrogenase/cyclohydrolase family. Homodimer.

It catalyses the reaction (6R)-5,10-methylene-5,6,7,8-tetrahydrofolate + NADP(+) = (6R)-5,10-methenyltetrahydrofolate + NADPH. The enzyme catalyses (6R)-5,10-methenyltetrahydrofolate + H2O = (6R)-10-formyltetrahydrofolate + H(+). The protein operates within one-carbon metabolism; tetrahydrofolate interconversion. In terms of biological role, catalyzes the oxidation of 5,10-methylenetetrahydrofolate to 5,10-methenyltetrahydrofolate and then the hydrolysis of 5,10-methenyltetrahydrofolate to 10-formyltetrahydrofolate. In Paenarthrobacter aurescens (strain TC1), this protein is Bifunctional protein FolD 2.